Here is a 353-residue protein sequence, read N- to C-terminus: (3aS,4S,5R,7aS)-5-hydroxy-7a-methyl-1-oxo-octahydro-1H-indene-4-carboxyl-CoA dehydrogenase (353 aa).

FMN-binding positions include 22-24 (GMG), 171-173 (AGG), and 194-195 (GT).

It belongs to the nitronate monooxygenase family.

The enzyme catalyses (3aS,4S,5R,7aS)-5-hydroxy-7a-methyl-1-oxo-octahydro-1H-indene-4-carboxyl-CoA + NAD(+) = (5R,7aS)-5-hydroxy-7a-methyl-1-oxo-2,3,5,6,7,7a-hexahydro-1H-indene-carboxyl-CoA + NADH + H(+). The protein operates within steroid metabolism; cholesterol degradation. Involved in the final steps of cholesterol and steroid degradation. Probably catalyzes the introduction of a double bound into the C ring of 5OH-HIC-CoA, leading to the formation of (5R,7aS)-5-hydroxy-7a-methyl-1-oxo-3,5,6,7-tetrahydro-2H-indene-4-carboxyl-CoA. The sequence is that of (3aS,4S,5R,7aS)-5-hydroxy-7a-methyl-1-oxo-octahydro-1H-indene-4-carboxyl-CoA dehydrogenase from Rhodococcus jostii (strain RHA1).